The primary structure comprises 530 residues: Phosphoenolpyruvate carboxykinase (ATP) (530 aa).

Positions 58, 195, and 201 each coordinate substrate. ATP-binding positions include Lys201, His220, and 236-244 (GLSGTGKTT). Mn(2+)-binding residues include Lys201 and His220. Asp257 serves as a coordination point for Mn(2+). ATP-binding positions include Glu285, Arg321, 440 to 441 (RI), and Thr446. Residue Arg321 coordinates substrate.

The protein belongs to the phosphoenolpyruvate carboxykinase (ATP) family. Mn(2+) is required as a cofactor.

Its subcellular location is the cytoplasm. It catalyses the reaction oxaloacetate + ATP = phosphoenolpyruvate + ADP + CO2. It functions in the pathway carbohydrate biosynthesis; gluconeogenesis. Its function is as follows. Involved in the gluconeogenesis. Catalyzes the conversion of oxaloacetate (OAA) to phosphoenolpyruvate (PEP) through direct phosphoryl transfer between the nucleoside triphosphate and OAA. This Staphylococcus aureus (strain MRSA252) protein is Phosphoenolpyruvate carboxykinase (ATP).